The sequence spans 600 residues: MNEELTQRCEEIRKNLIEVVSKNGGHLGSNLGVVELTVCLDEIFDFKEDIVLFDVGHQAYIYKILTDRAERFDSIRTRKGLSPFLDPNESSYDHFISGHAGTALPAAVGFAIANPDKKVIVVVGDASISNGHSLEALNYIGYKKLENILIIVNDNEMSIGENVGFISKFLKKVISSGKYQNFREDVKSFINRIKADRVKRTLERLERSIKGYVTPFYALESLGFRFFNVFEGNNIEKLLPMLKKIKDLKGPTILLVKTEKGKGYCFAEEDKEKFHGIAPFNIETGNTYKSLVSYSEVFGNKILELGKEDENIYTLSAAMIKGTGLHKFSEEFPERCIDTGIAEGFTVTLAAGLAKSGKKPYVCIYSTFIQRAISQLIHDVSIQNLPVRFIIDRSGIVGEDGKTHNGIYDLSFFLSIQNFTVLCPTTAKELGQALEISKNFNLGPLVIRIPRDSIFDIENEEPLEIGRWKVIKKGSKNLFIATGTMLKIILEIYDKLQNRGIYCTIISAASVKPLDENYLLNYIKEYDNIFVLEENYVKNSFGTAILEFFNDNGIQKPLHRIALKSAIIPHGKREELLKEERLKGESLIERIEELIYGRKK.

Residues histidine 57 and 98-100 (GHA) contribute to the thiamine diphosphate site. Mg(2+) is bound at residue aspartate 125. Thiamine diphosphate contacts are provided by residues 126 to 127 (AS), asparagine 155, tyrosine 264, and glutamate 343. A Mg(2+)-binding site is contributed by asparagine 155.

It belongs to the transketolase family. DXPS subfamily. Homodimer. It depends on Mg(2+) as a cofactor. Thiamine diphosphate is required as a cofactor.

It catalyses the reaction D-glyceraldehyde 3-phosphate + pyruvate + H(+) = 1-deoxy-D-xylulose 5-phosphate + CO2. The protein operates within metabolic intermediate biosynthesis; 1-deoxy-D-xylulose 5-phosphate biosynthesis; 1-deoxy-D-xylulose 5-phosphate from D-glyceraldehyde 3-phosphate and pyruvate: step 1/1. Functionally, catalyzes the acyloin condensation reaction between C atoms 2 and 3 of pyruvate and glyceraldehyde 3-phosphate to yield 1-deoxy-D-xylulose-5-phosphate (DXP). This Fusobacterium nucleatum subsp. nucleatum (strain ATCC 25586 / DSM 15643 / BCRC 10681 / CIP 101130 / JCM 8532 / KCTC 2640 / LMG 13131 / VPI 4355) protein is 1-deoxy-D-xylulose-5-phosphate synthase.